A 401-amino-acid chain; its full sequence is Imidazolonepropionase (401 aa).

His70 and His72 together coordinate Fe(3+). His70 and His72 together coordinate Zn(2+). 4-imidazolone-5-propanoate-binding residues include Arg79, Tyr142, and His175. An N-formimidoyl-L-glutamate-binding site is contributed by Tyr142. His240 contributes to the Fe(3+) binding site. His240 serves as a coordination point for Zn(2+). Gln243 serves as a coordination point for 4-imidazolone-5-propanoate. Residue Asp315 coordinates Fe(3+). Asp315 lines the Zn(2+) pocket. Positions 317 and 319 each coordinate N-formimidoyl-L-glutamate. A 4-imidazolone-5-propanoate-binding site is contributed by Thr320.

It belongs to the metallo-dependent hydrolases superfamily. HutI family. Zn(2+) serves as cofactor. Requires Fe(3+) as cofactor.

It localises to the cytoplasm. The catalysed reaction is 4-imidazolone-5-propanoate + H2O = N-formimidoyl-L-glutamate. It functions in the pathway amino-acid degradation; L-histidine degradation into L-glutamate; N-formimidoyl-L-glutamate from L-histidine: step 3/3. Functionally, catalyzes the hydrolytic cleavage of the carbon-nitrogen bond in imidazolone-5-propanoate to yield N-formimidoyl-L-glutamate. It is the third step in the universal histidine degradation pathway. This is Imidazolonepropionase from Caulobacter vibrioides (strain ATCC 19089 / CIP 103742 / CB 15) (Caulobacter crescentus).